Consider the following 622-residue polypeptide: 4-hydroxyphenylalkanoate adenylyltransferase (622 aa).

The protein belongs to the ATP-dependent AMP-binding enzyme family.

It carries out the reaction 17-(4-hydroxyphenyl)heptadecanoate + holo-[(phenol)carboxyphthiodiolenone synthase] + ATP = 17-(4-hydroxyphenyl)heptadecanoyl-[(phenol)carboxyphthiodiolenone synthase] + AMP + diphosphate. It catalyses the reaction 19-(4-hydroxyphenyl)nonadecanoate + holo-[(phenol)carboxyphthiodiolenone synthase] + ATP = 19-(4-hydroxyphenyl)nonadecanoyl-[(phenol)carboxyphthiodiolenone synthase] + AMP + diphosphate. It participates in lipid metabolism; fatty acid biosynthesis. Catalyzes the activation of long-chain fatty acids as acyl-adenylates (acyl-AMP), which are then transferred to the multifunctional polyketide synthase PpsA for further chain extension. Involved in the biosynthesis of phenolphthiocerol, which is an important intermediate in the biosynthesis of phenolic glycolipid (PGL), also called mycosid B. The polypeptide is 4-hydroxyphenylalkanoate adenylyltransferase (fadD29) (Mycobacterium marinum (strain ATCC BAA-535 / M)).